The primary structure comprises 322 residues: uncharacterized protein (322 aa).

One can recognise a Radical SAM core domain in the interval 26–267; the sequence is HFGHKVFKVA…CDQLEIIPPE (242 aa). [4Fe-4S] cluster-binding residues include cysteine 42, cysteine 54, and cysteine 57.

Belongs to the radical SAM superfamily. It depends on [4Fe-4S] cluster as a cofactor.

This is an uncharacterized protein from Bacillus subtilis (strain 168).